The sequence spans 1400 residues: DNA-directed RNA polymerase subunit beta' (1400 aa).

4 residues coordinate Zn(2+): Cys-70, Cys-72, Cys-85, and Cys-88. Mg(2+) contacts are provided by Asp-460, Asp-462, and Asp-464. Positions 814, 888, 895, and 898 each coordinate Zn(2+).

The protein belongs to the RNA polymerase beta' chain family. The RNAP catalytic core consists of 2 alpha, 1 beta, 1 beta' and 1 omega subunit. When a sigma factor is associated with the core the holoenzyme is formed, which can initiate transcription. It depends on Mg(2+) as a cofactor. The cofactor is Zn(2+).

The enzyme catalyses RNA(n) + a ribonucleoside 5'-triphosphate = RNA(n+1) + diphosphate. In terms of biological role, DNA-dependent RNA polymerase catalyzes the transcription of DNA into RNA using the four ribonucleoside triphosphates as substrates. The chain is DNA-directed RNA polymerase subunit beta' from Methylococcus capsulatus (strain ATCC 33009 / NCIMB 11132 / Bath).